We begin with the raw amino-acid sequence, 711 residues long: MPADVNLSQKPQVLGPEKQDGSCEASVSFEDVTVDFSREEWQQLDPAQRCLYRDVMLELYSHLFAVGYHIPNPEVIFRMLKEKEPRVEEAEVSHQRCQEREFGLEIPQKEISKKASFQKDMVGEFTRDGSWCSILEELRLDADRTKKDEQNQIQPMSHSAFFNKKTLNTESNCEYKDPGKMIRTRPHLASSQKQPQKCCLFTESLKLNLEVNGQNESNDTEQLDDVVGSGQLFSHSSSDACSKNIHTGETFCKGNQCRKVCGHKQSLKQHQIHTQKKPDGCSECGGSFTQKSHLFAQQRIHSVGNLHECGKCGKAFMPQLKLSVYLTDHTGDIPCICKECGKVFIQRSELLTHQKTHTRKKPYKCHDCGKAFFQMLSLFRHQRTHSREKLYECSECGKGFSQNSTLIIHQKIHTGERQYACSECGKAFTQKSTLSLHQRIHSGQKSYVCIECGQAFIQKAHLIVHQRSHTGEKPYQCHNCGKSFISKSQLDIHHRIHTGEKPYECSDCGKTFTQKSHLNIHQKIHTGERHHVCSECGKAFNQKSILSMHQRIHTGEKPYKCSECGKAFTSKSQFKEHQRIHTGEKPYVCTECGKAFNGRSNFHKHQITHTRERPFVCYKCGKAFVQKSELITHQRTHMGEKPYECLDCGKSFSKKPQLKVHQRIHTGERPYVCSECGKAFNNRSNFNKHQTTHTRDKSYKCSYSVKGFTKQ.

Positions 1–11 (MPADVNLSQKP) are enriched in polar residues. Residues 1 to 21 (MPADVNLSQKPQVLGPEKQDG) form a disordered region. The region spanning 27–98 (VSFEDVTVDF…EAEVSHQRCQ (72 aa)) is the KRAB domain. Residues 279-301 (DGCSECGGSFTQKSHLFAQQRIH) form a C2H2-type 1; atypical zinc finger. The segment at 307–329 (HECGKCGKAFMPQLKLSVYLTDH) adopts a C2H2-type 2; atypical zinc-finger fold. Residues 335 to 357 (CICKECGKVFIQRSELLTHQKTH) form a C2H2-type 3 zinc finger. Positions 359–362 (RKKP) match the Nuclear localization signal motif. 12 consecutive C2H2-type zinc fingers follow at residues 363-385 (YKCH…QRTH), 391-413 (YECS…QKIH), 419-441 (YACS…QRIH), 447-469 (YVCI…QRSH), 475-497 (YQCH…HRIH), 503-525 (YECS…QKIH), 531-553 (HVCS…QRIH), 559-581 (YKCS…QRIH), 587-609 (YVCT…QITH), 615-637 (FVCY…QRTH), 643-665 (YECL…QRIH), and 671-693 (YVCS…QTTH).

The protein belongs to the krueppel C2H2-type zinc-finger protein family. As to expression, ubiquitous.

The protein localises to the cytoplasm. It is found in the nucleus. Functionally, down-regulates the expression of several chemokine receptors. Interferes with HIV-1 replication by suppressing Tat-induced viral LTR promoter activity. The polypeptide is Zinc finger protein 175 (ZNF175) (Homo sapiens (Human)).